Reading from the N-terminus, the 80-residue chain is Cell division activator CedA (80 aa).

Belongs to the CedA family.

Functionally, activates the cell division inhibited by chromosomal DNA over-replication. The protein is Cell division activator CedA of Salmonella choleraesuis (strain SC-B67).